Here is a 387-residue protein sequence, read N- to C-terminus: ERBB-3 BINDING PROTEIN 1 (387 aa).

Necessary for nucleolar localization stretches follow at residues 1-49 and 297-387; these read MSDD…IVDL and LLQP…PMEG. The segment at 47–55 is RNA-binding; it reads VDLCEKGDA. The tract at residues 337–387 is disordered; it reads LQPTKTTENEPEIKAWLALPTKTKKKGGGKKKKGKKGDKVEEASQAEPMEG. Residues 356–373 are interaction with RNA; sequence PTKTKKKGGGKKKKGKKG. The segment covering 358–372 has biased composition (basic residues); sequence KTKKKGGGKKKKGKK. Residues 360-369 carry the Nuclear localization signal motif; that stretch reads KKKGGGKKKK.

Belongs to the peptidase M24 family. Component of a ribonucleoprotein complex. In terms of tissue distribution, expressed during tuberisation and in roots, nodes, internodes, petioles, leaves, stolons, tubers and sprouts.

It is found in the nucleus. Binds RNA. Associates with 28S, 18S and 5.8S mature rRNAs, several rRNA precursors and probably U3 small nucleolar RNA. May be involved in regulation of intermediate and late steps of rRNA processing. May be involved in ribosome assembly. Required for expression of cell cycle genes such as CYCD3-1, RNR2A and CDKB1-1. Promotes, in a dose- and auxin-dependent manner, organ growth by stimulating both cell proliferation and expansion, via the regulation of RBR1 levels. The sequence is that of ERBB-3 BINDING PROTEIN 1 from Solanum tuberosum (Potato).